The primary structure comprises 540 residues: Light-independent protochlorophyllide reductase subunit B (540 aa).

D36 contacts [4Fe-4S] cluster. D287 functions as the Proton donor in the catalytic mechanism. 422–423 (GL) is a substrate binding site.

It belongs to the ChlB/BchB/BchZ family. As to quaternary structure, protochlorophyllide reductase is composed of three subunits; BchL, BchN and BchB. Forms a heterotetramer of two BchB and two BchN subunits. [4Fe-4S] cluster serves as cofactor.

It catalyses the reaction chlorophyllide a + oxidized 2[4Fe-4S]-[ferredoxin] + 2 ADP + 2 phosphate = protochlorophyllide a + reduced 2[4Fe-4S]-[ferredoxin] + 2 ATP + 2 H2O. It participates in porphyrin-containing compound metabolism; bacteriochlorophyll biosynthesis (light-independent). Component of the dark-operative protochlorophyllide reductase (DPOR) that uses Mg-ATP and reduced ferredoxin to reduce ring D of protochlorophyllide (Pchlide) to form chlorophyllide a (Chlide). This reaction is light-independent. The NB-protein (BchN-BchB) is the catalytic component of the complex. This chain is Light-independent protochlorophyllide reductase subunit B, found in Rhodopseudomonas palustris (strain TIE-1).